The sequence spans 1338 residues: ABC-type transporter kk1G (1338 aa).

Positions 1 to 21 (MSAIELPPLRSRSEEAARAEH) are disordered. Residues 11-21 (SRSEEAARAEH) are compositionally biased toward basic and acidic residues. Helical transmembrane passes span 75–95 (YFLI…MPLM), 130–150 (LYIF…MLAI), 203–223 (HFAT…VALV), 230–250 (LIAS…FPPF), 312–332 (TMSP…WFGI), and 340–360 (ISSV…VMNI). Residues 80 to 372 (LCCFTSIGAG…VASPIISIAK (293 aa)) form the ABC transmembrane type-1 1 domain. Positions 405–706 (ITFINVAFSY…GDGVYYGLVH (302 aa)) constitute an ABC transporter 1 domain. ATP is bound at residue 440–447 (GPSGSGKS). 2 disordered regions span residues 473 to 518 (EIPS…TCTG) and 715 to 747 (EDDD…HASR). Transmembrane regions (helical) follow at residues 777–797 (VCCI…YIFA), 816–836 (FWAG…YLLG), 895–917 (MSMA…VYGW), 919–941 (LSLV…RTRL), 1003–1023 (IIFA…FWYG), and 1037–1057 (FFIV…WFSF). Positions 777 to 1063 (VCCIGILGAG…WFSFTPSMAQ (287 aa)) constitute an ABC transmembrane type-1 2 domain. The ABC transporter 2 domain maps to 1096–1333 (IEFQHVSFKY…KGVYWQMCQA (238 aa)). Residue 1130 to 1137 (GSSGCGKS) coordinates ATP.

Belongs to the ABC transporter superfamily. ABCB family. Multidrug resistance exporter (TC 3.A.1.201) subfamily.

It is found in the cell membrane. Its pathway is secondary metabolite biosynthesis. In terms of biological role, ABC transporter; part of the gene cluster that mediates the biosynthesis of KK-1, a novel cyclic depsipeptide with 10 residues which is a promising active compound with high activity against many plant pathogens, especially Botrytis cinerea. Is probably directly involved in the secretion of KK-1 and thus confers self-tolerance against KK-1. This chain is ABC-type transporter kk1G, found in Curvularia clavata.